A 110-amino-acid chain; its full sequence is ATP-dependent Clp protease adapter protein ClpS (110 aa).

The segment covering 1-10 has biased composition (basic and acidic residues); it reads MSDDRRRGDE. Positions 1-27 are disordered; the sequence is MSDDRRRGDEDGGAGTGVITKTKPKTK.

It belongs to the ClpS family. In terms of assembly, binds to the N-terminal domain of the chaperone ClpA.

Involved in the modulation of the specificity of the ClpAP-mediated ATP-dependent protein degradation. In Parvibaculum lavamentivorans (strain DS-1 / DSM 13023 / NCIMB 13966), this protein is ATP-dependent Clp protease adapter protein ClpS.